A 122-amino-acid chain; its full sequence is Large ribosomal subunit protein uL18 (122 aa).

Residues 1 to 20 (MFKKVSKNANRLSRHQRVRN) are disordered.

This sequence belongs to the universal ribosomal protein uL18 family. Part of the 50S ribosomal subunit; part of the 5S rRNA/L5/L18/L25 subcomplex. Contacts the 5S and 23S rRNAs.

Its function is as follows. This is one of the proteins that bind and probably mediate the attachment of the 5S RNA into the large ribosomal subunit, where it forms part of the central protuberance. This is Large ribosomal subunit protein uL18 from Alkaliphilus oremlandii (strain OhILAs) (Clostridium oremlandii (strain OhILAs)).